A 208-amino-acid chain; its full sequence is High frequency lysogenization protein HflD homolog (208 aa).

It belongs to the HflD family.

It is found in the cytoplasm. Its subcellular location is the cell inner membrane. This Yersinia pestis bv. Antiqua (strain Nepal516) protein is High frequency lysogenization protein HflD homolog.